Consider the following 492-residue polypeptide: Putative methyl-accepting chemotaxis AlkN (492 aa).

The next 2 helical transmembrane spans lie at 9–29 (FFLILVMAGFSFFVALFGMRL) and 159–179 (YVYFLVVSINCLFFVVIFLLM). Residues 180 to 231 (KKTRSSIDEIVHVMNDMSRGDLTYRTIPSNDEVGKMQSSIIAMGAGVSALIE) form the HAMP domain. The region spanning 236 to 472 (IQGDLFNSAG…DMLDNANIIR (237 aa)) is the Methyl-accepting transducer domain.

It belongs to the methyl-accepting chemotaxis (MCP) protein family.

The protein localises to the membrane. The protein operates within hydrocarbon metabolism; alkane degradation. Functionally, chemotactic-signal transducers respond to changes in the concentration of attractants and repellents in the environment, transduce a signal from the outside to the inside of the cell, and facilitate sensory adaptation through the variation of the level of methylation. The protein is Putative methyl-accepting chemotaxis AlkN (alkN) of Ectopseudomonas oleovorans (Pseudomonas oleovorans).